Here is an 855-residue protein sequence, read N- to C-terminus: DNA mismatch repair protein MutS (855 aa).

Position 613-620 (613-620 (GPNMGGKS)) interacts with ATP.

The protein belongs to the DNA mismatch repair MutS family.

In terms of biological role, this protein is involved in the repair of mismatches in DNA. It is possible that it carries out the mismatch recognition step. This protein has a weak ATPase activity. This is DNA mismatch repair protein MutS from Azotobacter vinelandii (strain DJ / ATCC BAA-1303).